A 322-amino-acid polypeptide reads, in one-letter code: Uridylate-specific endoribonuclease EndoU (322 aa).

A helical transmembrane segment spans residues 25-45 (FVIVGLLITIGILSWHFYEYF). One can recognise an EndoU domain in the interval 53-322 (TPDDVLTLSK…LIGTVYPDSS (270 aa)). Catalysis depends on residues His200, His215, and Lys259.

Belongs to the ENDOU family. Monomer. It depends on Mn(2+) as a cofactor. As to expression, predominantly expressed in head.

It is found in the membrane. The catalysed reaction is a ribonucleotidyl-ribonucleotide-RNA = a 3'-end 2',3'-cyclophospho-ribonucleotide-RNA + a 5'-end dephospho-ribonucleoside-RNA. Endoribonuclease that cleaves single-stranded RNAs at uridylates and releases products that have 2'-3'-cyclic phosphate termini. Preferentially cleaves single stranded RNA at poly-U sites with CU, UC and AU sites cleaved less efficiently. May target mRNAs encoding proteins involved in lipid metabolism to regulate their expression. Regulates levels of TBPH protein, but not mRNA, by an as yet unknown mechanism. Important for neuronal development or function. This chain is Uridylate-specific endoribonuclease EndoU, found in Drosophila melanogaster (Fruit fly).